The chain runs to 196 residues: dITP/XTP pyrophosphatase (196 aa).

Position 10-15 (10-15) interacts with substrate; that stretch reads TSNKGK. Aspartate 71 (proton acceptor) is an active-site residue. Aspartate 71 is a Mg(2+) binding site. Residues serine 72, 156–159, lysine 179, and 184–185 each bind substrate; these read FGYD and HR.

This sequence belongs to the HAM1 NTPase family. As to quaternary structure, homodimer. Requires Mg(2+) as cofactor.

The enzyme catalyses XTP + H2O = XMP + diphosphate + H(+). It catalyses the reaction dITP + H2O = dIMP + diphosphate + H(+). It carries out the reaction ITP + H2O = IMP + diphosphate + H(+). In terms of biological role, pyrophosphatase that catalyzes the hydrolysis of nucleoside triphosphates to their monophosphate derivatives, with a high preference for the non-canonical purine nucleotides XTP (xanthosine triphosphate), dITP (deoxyinosine triphosphate) and ITP. Seems to function as a house-cleaning enzyme that removes non-canonical purine nucleotides from the nucleotide pool, thus preventing their incorporation into DNA/RNA and avoiding chromosomal lesions. The sequence is that of dITP/XTP pyrophosphatase from Haemophilus ducreyi (strain 35000HP / ATCC 700724).